The primary structure comprises 412 residues: Branched-chain alpha-ketoacid dehydrogenase kinase (412 aa).

Residues 1–30 (MILTSVLGSGPRSGSSLWPLLGSSLSLRVR) constitute a mitochondrion transit peptide. Position 31 is a phosphoserine (serine 31). The region spanning 159 to 404 (LDDHKDVVTL…DVYLRLRHID (246 aa)) is the Histidine kinase domain. An N6-acetyllysine mark is found at lysine 192 and lysine 233. ATP-binding residues include asparagine 279 and aspartate 315. Asparagine 279 contacts Mg(2+). Valine 328, aspartate 330, and phenylalanine 333 together coordinate K(+). The ATP site is built by threonine 334 and threonine 335. Serine 356 and serine 360 each carry phosphoserine. Residues histidine 364, glycine 367, and leucine 370 each coordinate ATP. Glycine 367 contacts K(+).

The protein belongs to the PDK/BCKDK protein kinase family. As to quaternary structure, homodimer. Homotetramer. Dimerizes through interaction of two opposing nucleotide-binding domains. Interacts with E2 component of the branched-chain alpha-ketoacid dehydrogenase (BCKDH) complex. Competes with BCKDK for binding to the E2 component; this interaction is modulated by branched-chain alpha-keto acids. At steady state, BCKDH holoenzyme contains BCKDK and BCKDHA is phosphorylated. In response to high levels of branched-chain alpha-keto acids, the inhibitory BCKDK is replaced by activating PPM1K leading to BCKDHA dephosphorylation and BCAA degradation. In terms of processing, autophosphorylated. Expressed in heart and liver.

The protein resides in the mitochondrion matrix. It localises to the mitochondrion. It carries out the reaction L-seryl-[3-methyl-2-oxobutanoate dehydrogenase] + ATP = O-phospho-L-seryl-[3-methyl-2-oxobutanoate dehydrogenase] + ADP + H(+). It catalyses the reaction L-seryl-[protein] + ATP = O-phospho-L-seryl-[protein] + ADP + H(+). With respect to regulation, the ATP-ase activity is up-regulated by potassium and rubidium ions but not by sodium ions. Up-regulated in the presence of apo- or lipoylated-DBT/E2b subunit of the BCKDH complex. Functionally, serine/threonine-protein kinase component of macronutrients metabolism. Forms a functional kinase and phosphatase pair with PPM1K, serving as a metabolic regulatory node that coordinates branched-chain amino acids (BCAAs) with glucose and lipid metabolism via two distinct phosphoprotein targets: mitochondrial BCKDHA subunit of the branched-chain alpha-ketoacid dehydrogenase (BCKDH) complex and cytosolic ACLY, a lipogenic enzyme of Krebs cycle. Phosphorylates and inactivates mitochondrial BCKDH complex a multisubunit complex consisting of three multimeric components each involved in different steps of BCAA catabolism: E1 composed of BCKDHA and BCKDHB, E2 core composed of DBT monomers, and E3 composed of DLD monomers. Associates with the E2 component of BCKDH complex and phosphorylates BCKDHA on Ser-333, leading to conformational changes that interrupt substrate channeling between E1 and E2 and inactivates the BCKDH complex. phosphorylates ACLY on Ser-455 in response to changes in cellular carbohydrate abundance such as occurs during fasting to feeding metabolic transition. Refeeding stimulates MLXIPL/ChREBP transcription factor, leading to increased BCKDK to PPM1K expression ratio, phosphorylation and activation of ACLY that ultimately results in the generation of malonyl-CoA and oxaloacetate immediate substrates of de novo lipogenesis and glucogenesis, respectively. Recognizes phosphosites having SxxE/D canonical motif. In Rattus norvegicus (Rat), this protein is Branched-chain alpha-ketoacid dehydrogenase kinase (Bckdk).